A 73-amino-acid polypeptide reads, in one-letter code: MKSWMAILLVMALIIFTLDNCYSTDDKPIGKCGDRQRNKLCLVCQDRSQIDYYYTECCIYDQTYYMCLDMLRH.

The signal sequence occupies residues 1–23; the sequence is MKSWMAILLVMALIIFTLDNCYS. 3 disulfide bridges follow: Cys32-Cys58, Cys41-Cys57, and Cys44-Cys67.

This sequence belongs to the scoloptoxin family. Expressed by the venom gland.

It is found in the secreted. Inhibits voltage-gated potassium channels. The sequence is that of Kappa-scoloptoxin(03)-Ssm1c from Scolopendra mutilans (Chinese red-headed centipede).